Reading from the N-terminus, the 646-residue chain is UvrABC system protein C (646 aa).

A GIY-YIG domain is found at 16–95; the sequence is VEPGVYRFRD…IKEFDPRFNV (80 aa). The UVR domain maps to 208–243; that stretch reads DRFARALEQQMNAAAEQLDFERAARLRDDLSALKRA.

The protein belongs to the UvrC family. Interacts with UvrB in an incision complex.

Its subcellular location is the cytoplasm. In terms of biological role, the UvrABC repair system catalyzes the recognition and processing of DNA lesions. UvrC both incises the 5' and 3' sides of the lesion. The N-terminal half is responsible for the 3' incision and the C-terminal half is responsible for the 5' incision. In Mycobacterium bovis (strain BCG / Pasteur 1173P2), this protein is UvrABC system protein C.